Reading from the N-terminus, the 311-residue chain is GTP cyclohydrolase FolE2 (311 aa).

Belongs to the GTP cyclohydrolase IV family.

The catalysed reaction is GTP + H2O = 7,8-dihydroneopterin 3'-triphosphate + formate + H(+). The protein operates within cofactor biosynthesis; 7,8-dihydroneopterin triphosphate biosynthesis; 7,8-dihydroneopterin triphosphate from GTP: step 1/1. Its function is as follows. Converts GTP to 7,8-dihydroneopterin triphosphate. This Xanthomonas campestris pv. campestris (strain 8004) protein is GTP cyclohydrolase FolE2.